Reading from the N-terminus, the 205-residue chain is GTP cyclohydrolase-2 (205 aa).

Residue 49-53 coordinates GTP; it reads RLHSE. Zn(2+) is bound by residues C54, C65, and C67. GTP-binding positions include Q70, 92-94, and T114; that span reads EGR. D126 functions as the Proton acceptor in the catalytic mechanism. R128 (nucleophile) is an active-site residue. Positions 149 and 154 each coordinate GTP.

This sequence belongs to the GTP cyclohydrolase II family. Zn(2+) is required as a cofactor.

The enzyme catalyses GTP + 4 H2O = 2,5-diamino-6-hydroxy-4-(5-phosphoribosylamino)-pyrimidine + formate + 2 phosphate + 3 H(+). It functions in the pathway cofactor biosynthesis; riboflavin biosynthesis; 5-amino-6-(D-ribitylamino)uracil from GTP: step 1/4. Its function is as follows. Catalyzes the conversion of GTP to 2,5-diamino-6-ribosylamino-4(3H)-pyrimidinone 5'-phosphate (DARP), formate and pyrophosphate. This is GTP cyclohydrolase-2 from Pseudomonas putida (strain GB-1).